The primary structure comprises 46 residues: Esculentin-1R (46 aa).

A disulfide bond links cysteine 40 and cysteine 46.

In terms of tissue distribution, expressed by the skin glands.

It localises to the secreted. Its function is as follows. Shows antibacterial activity against representative Gram-negative and Gram-positive bacterial species, and hemolytic activity. The protein is Esculentin-1R of Pelophylax ridibundus (Marsh frog).